Reading from the N-terminus, the 255-residue chain is 3-dehydroquinate dehydratase (255 aa).

Residues 47–49 (EWR) and Arg83 contribute to the 3-dehydroquinate site. The active-site Proton donor/acceptor is the His144. The active-site Schiff-base intermediate with substrate is the Lys171. Arg214, Ser233, and Gln237 together coordinate 3-dehydroquinate.

Belongs to the type-I 3-dehydroquinase family. As to quaternary structure, homodimer or homotetramer.

The enzyme catalyses 3-dehydroquinate = 3-dehydroshikimate + H2O. It functions in the pathway metabolic intermediate biosynthesis; chorismate biosynthesis; chorismate from D-erythrose 4-phosphate and phosphoenolpyruvate: step 3/7. Functionally, involved in the third step of the chorismate pathway, which leads to the biosynthesis of aromatic amino acids. Catalyzes the cis-dehydration of 3-dehydroquinate (DHQ) and introduces the first double bond of the aromatic ring to yield 3-dehydroshikimate. The reaction involves the formation of an imine intermediate between the keto group of 3-dehydroquinate and the epsilon-amino group of Lys-170 at the active site. This Clostridioides difficile (strain 630) (Peptoclostridium difficile) protein is 3-dehydroquinate dehydratase.